Consider the following 338-residue polypeptide: tRNA N6-adenosine threonylcarbamoyltransferase (338 aa).

Histidine 114 and histidine 118 together coordinate Fe cation. Substrate-binding positions include 136–140, aspartate 169, glycine 182, aspartate 186, and asparagine 275; that span reads LVSGG. Aspartate 301 is a binding site for Fe cation.

The protein belongs to the KAE1 / TsaD family. Requires Fe(2+) as cofactor.

It is found in the cytoplasm. The enzyme catalyses L-threonylcarbamoyladenylate + adenosine(37) in tRNA = N(6)-L-threonylcarbamoyladenosine(37) in tRNA + AMP + H(+). In terms of biological role, required for the formation of a threonylcarbamoyl group on adenosine at position 37 (t(6)A37) in tRNAs that read codons beginning with adenine. Is involved in the transfer of the threonylcarbamoyl moiety of threonylcarbamoyl-AMP (TC-AMP) to the N6 group of A37, together with TsaE and TsaB. TsaD likely plays a direct catalytic role in this reaction. The polypeptide is tRNA N6-adenosine threonylcarbamoyltransferase (Streptococcus equi subsp. zooepidemicus (strain MGCS10565)).